A 443-amino-acid chain; its full sequence is 3-phosphoshikimate 1-carboxyvinyltransferase (443 aa).

Residues Lys25, Ser26, and Arg30 each coordinate 3-phosphoshikimate. Lys25 is a phosphoenolpyruvate binding site. Phosphoenolpyruvate contacts are provided by Gly117 and Arg145. Ser188, Ser189, Gln190, Ser217, Glu331, and His358 together coordinate 3-phosphoshikimate. Gln190 serves as a coordination point for phosphoenolpyruvate. Catalysis depends on Glu331, which acts as the Proton acceptor. Residues Arg362, Arg404, and Lys428 each contribute to the phosphoenolpyruvate site.

This sequence belongs to the EPSP synthase family. In terms of assembly, monomer.

Its subcellular location is the cytoplasm. The catalysed reaction is 3-phosphoshikimate + phosphoenolpyruvate = 5-O-(1-carboxyvinyl)-3-phosphoshikimate + phosphate. Its pathway is metabolic intermediate biosynthesis; chorismate biosynthesis; chorismate from D-erythrose 4-phosphate and phosphoenolpyruvate: step 6/7. Its function is as follows. Catalyzes the transfer of the enolpyruvyl moiety of phosphoenolpyruvate (PEP) to the 5-hydroxyl of shikimate-3-phosphate (S3P) to produce enolpyruvyl shikimate-3-phosphate and inorganic phosphate. This chain is 3-phosphoshikimate 1-carboxyvinyltransferase, found in Tropheryma whipplei (strain TW08/27) (Whipple's bacillus).